The sequence spans 147 residues: Ubiquitin-conjugating enzyme E2 D4 (147 aa).

The region spanning 1 to 147 is the UBC core domain; it reads MALKRIQKEL…AREWTQKYAM (147 aa). Cys-85 acts as the Glycyl thioester intermediate in catalysis.

It belongs to the ubiquitin-conjugating enzyme family.

The enzyme catalyses S-ubiquitinyl-[E1 ubiquitin-activating enzyme]-L-cysteine + [E2 ubiquitin-conjugating enzyme]-L-cysteine = [E1 ubiquitin-activating enzyme]-L-cysteine + S-ubiquitinyl-[E2 ubiquitin-conjugating enzyme]-L-cysteine.. It functions in the pathway protein modification; protein ubiquitination. In terms of biological role, accepts ubiquitin from the E1 complex and catalyzes its covalent attachment to other proteins. In vitro able to promote polyubiquitination using all 7 ubiquitin Lys residues, but may prefer 'Lys-11' and 'Lys-48'-linked polyubiquitination. In Homo sapiens (Human), this protein is Ubiquitin-conjugating enzyme E2 D4 (UBE2D4).